A 180-amino-acid chain; its full sequence is E3 ubiquitin-protein ligase RNF5 (180 aa).

A2 carries the post-translational modification N-acetylalanine. An RING-type zinc finger spans residues 27–68 (CNICLETAREAVVSVCGHLYCWPCLHQWLETRPERQECPVCK). The segment at 79 to 110 (LYGRGSQKPQDPRLKTPPRPQGQRPAPESRGG) is disordered. Residue S84 is modified to Phosphoserine. Phosphothreonine is present on T94. S107 is subject to Phosphoserine. A run of 2 helical transmembrane segments spans residues 118–138 (GGFH…TTVF) and 160–180 (SWQD…LLSI).

The protein belongs to the RNF5 family. Interacts with PXN. Interacts with Salmonella typhimurium sopA. Interacts with JKAMP. Interacts with STING1; the interaction of endogenous proteins is dependent on viral infection. Widely expressed.

The protein localises to the cell membrane. It localises to the mitochondrion membrane. Its subcellular location is the endoplasmic reticulum membrane. The catalysed reaction is S-ubiquitinyl-[E2 ubiquitin-conjugating enzyme]-L-cysteine + [acceptor protein]-L-lysine = [E2 ubiquitin-conjugating enzyme]-L-cysteine + N(6)-ubiquitinyl-[acceptor protein]-L-lysine.. It participates in protein modification; protein ubiquitination. Membrane-bound E3 ubiquitin-protein ligase that mediates ubiquitination of target proteins. May function together with E2 ubiquitin-conjugating enzymes UBE2D1/UBCH5A and UBE2D2/UBC4. Mediates ubiquitination of PXN/paxillin,thereby regulating cell motility and localization of PXN/paxillin. Catalyzes ubiquitination of Salmonella type III secreted protein sopA. Mediates the 'Lys-63'-linked polyubiquitination of JKAMP thereby regulating JKAMP function by decreasing its association with components of the proteasome and ERAD; the ubiquitination appears to involve E2 ubiquitin-conjugating enzyme UBE2N. Mediates the 'Lys-48'-linked polyubiquitination of STING1 at 'Lys-150' leading to its proteasomal degradation; the ubiquitination occurs in mitochondria after viral transfection and regulates antiviral responses. Catalyzes ubiquitination and subsequent degradation of ATG4B, thereby inhibiting autophagy. This Homo sapiens (Human) protein is E3 ubiquitin-protein ligase RNF5.